A 55-amino-acid polypeptide reads, in one-letter code: Large ribosomal subunit protein bL33A (55 aa).

This sequence belongs to the bacterial ribosomal protein bL33 family.

The polypeptide is Large ribosomal subunit protein bL33A (Mycobacterium sp. (strain KMS)).